A 742-amino-acid chain; its full sequence is Potassium transporter 19 (742 aa).

The Cytoplasmic segment spans residues 1–46 (MSVQEDGAARPEPDVLRRHDSLYGDAEKVSNNKRHGAGGSWARTLQ). A helical membrane pass occupies residues 47 to 67 (LAFQSIGVVYGDVGTSPLYVY). The Extracellular portion of the chain corresponds to 68 to 83 (SSTFPNGIKHPDDLVG). A helical membrane pass occupies residues 84-104 (VLSLILYTLILIPMVKYVFIV). The Cytoplasmic segment spans residues 105–170 (LYANDNGDGG…QKLESSNAAK (66 aa)). The helical transmembrane segment at 171–191 (IALFTITILGTSMVMGDGTLT) threads the bilayer. The Extracellular segment spans residues 192–206 (PAISVLSAVSGIREK). Residues 207-227 (APNLTQSQVVWISVAILFVLF) form a helical membrane-spanning segment. The Cytoplasmic portion of the chain corresponds to 228-236 (SMQRFGTDK). The helical transmembrane segment at 237-257 (VGYTFAPVISVWFLLIAGIGM) threads the bilayer. Over 258–287 (YNLTVHEITILRAFNPKYIVDYFRRNGKEA) the chain is Extracellular. Residue Asn259 is glycosylated (N-linked (GlcNAc...) asparagine). The chain crosses the membrane as a helical span at residues 288–308 (WVSLGGVVLCITGTEAMFADL). At 309–317 (GHFNIRAIQ) the chain is on the cytoplasmic side. Residues 318 to 338 (LSFTCVLFPSVALCYMGQAAY) form a helical membrane-spanning segment. Over 339 to 352 (LRKFPENVGDTFYR) the chain is Extracellular. Residues 353–373 (SIPAPLFWPVFVVAIMGAIIA) traverse the membrane as a helical segment. The Cytoplasmic portion of the chain corresponds to 374–409 (SQAMLSGAFAILSKALSLGCFPRVEVVHTSNKYEGQ). Residues 410-430 (VYIPEVNFLIGAASVAVTLAF) form a helical membrane-spanning segment. Topologically, residues 431-441 (QTTANIGNAYG) are extracellular. The chain crosses the membrane as a helical span at residues 442–462 (ICVVTVFSITTHLMTVVMLLI). The Cytoplasmic portion of the chain corresponds to 463–468 (WKVRLP). Residues 469–489 (FIAAFYAAFGLAEFLYLSSIL) form a helical membrane-spanning segment. At 490 to 495 (SKFAEG) the chain is on the extracellular side. The helical transmembrane segment at 496–516 (GYLPFCFSLVLMALMATWHYV) threads the bilayer. Residues 517-742 (HVKRYWYELD…LLKVGITYEI (226 aa)) are Cytoplasmic-facing.

It belongs to the HAK/KUP transporter (TC 2.A.72.3) family.

The protein resides in the membrane. High-affinity potassium transporter. This chain is Potassium transporter 19 (HAK19), found in Oryza sativa subsp. japonica (Rice).